The sequence spans 352 residues: MNPTPSETSLDPRVARLIDANLDRAREGLRVVEDWCRFGLEQQDLVVRLKDWRQRLGRLHHDSYKQARSTSTDTGAGLKHPAQLDRHSPDRVVAANCARAQEALRVLEEYGRTIDPALAAEAAAIRYGLYDLEVTCLNATLGARRRNKLKDACLCLITTPCDDLTDRVEAALRNGVGMVQYRCKAGNDRERLQEAQQLRQLCNKFGALLLINDRVDLALAVDADGVHLGQEDMPSEVARDLLGVDRLLGRSTHSIDQVHQAQQEPIDYLGFGPIHSTAVKPERNPVGVELLAKATAISQRPVFAIGGITPANLPALLMAGGQRAAVIGAIMHSEDSGQATRHLLQQLDQATI.

The segment at 1-128 (MNPTPSETSL…AAEAAAIRYG (128 aa)) is unknown. Residues 63-85 (SYKQARSTSTDTGAGLKHPAQLD) form a disordered region. Residues 129-352 (LYDLEVTCLN…LLQQLDQATI (224 aa)) are thiamine-phosphate synthase. 4-amino-2-methyl-5-(diphosphooxymethyl)pyrimidine-binding positions include 180 to 184 (QYRCK) and Asn212. Asp213 and Asp232 together coordinate Mg(2+). 4-amino-2-methyl-5-(diphosphooxymethyl)pyrimidine is bound by residues Ser251 and Lys280. Residue Gly307 participates in 2-[(2R,5Z)-2-carboxy-4-methylthiazol-5(2H)-ylidene]ethyl phosphate binding.

The protein belongs to the thiamine-phosphate synthase family. It depends on Mg(2+) as a cofactor.

The catalysed reaction is 2-[(2R,5Z)-2-carboxy-4-methylthiazol-5(2H)-ylidene]ethyl phosphate + 4-amino-2-methyl-5-(diphosphooxymethyl)pyrimidine + 2 H(+) = thiamine phosphate + CO2 + diphosphate. It carries out the reaction 2-(2-carboxy-4-methylthiazol-5-yl)ethyl phosphate + 4-amino-2-methyl-5-(diphosphooxymethyl)pyrimidine + 2 H(+) = thiamine phosphate + CO2 + diphosphate. It catalyses the reaction 4-methyl-5-(2-phosphooxyethyl)-thiazole + 4-amino-2-methyl-5-(diphosphooxymethyl)pyrimidine + H(+) = thiamine phosphate + diphosphate. It functions in the pathway cofactor biosynthesis; thiamine diphosphate biosynthesis; thiamine phosphate from 4-amino-2-methyl-5-diphosphomethylpyrimidine and 4-methyl-5-(2-phosphoethyl)-thiazole: step 1/1. In terms of biological role, condenses 4-methyl-5-(beta-hydroxyethyl)thiazole monophosphate (THZ-P) and 2-methyl-4-amino-5-hydroxymethyl pyrimidine pyrophosphate (HMP-PP) to form thiamine monophosphate (TMP). The polypeptide is Thiamine-phosphate synthase (Synechococcus sp. (strain CC9605)).